The following is a 241-amino-acid chain: MAPK phosphothreonine lyase (241 aa).

Histidine 106 acts as the Proton donor in catalysis. The active-site Proton acceptor is lysine 136.

The protein belongs to the phosphothreonine lyase family.

It is found in the secreted. In terms of biological role, secreted effector that irreversibly inactivates host MAP kinases by catalyzing the dephosphorylation of the phosphothreonine residue in the pT-X-pY motif present in MAPKs, via a beta-elimination reaction leading to a dehydrobutyrine residue. The protein is MAPK phosphothreonine lyase (spvC) of Salmonella enteritidis.